The chain runs to 84 residues: Acyl carrier protein (84 aa).

Positions 4 to 80 constitute a Carrier domain; that stretch reads SETFEKVKKI…EAVDYINNQV (77 aa). Residue serine 40 is modified to O-(pantetheine 4'-phosphoryl)serine.

It belongs to the acyl carrier protein (ACP) family. 4'-phosphopantetheine is transferred from CoA to a specific serine of apo-ACP by AcpS. This modification is essential for activity because fatty acids are bound in thioester linkage to the sulfhydryl of the prosthetic group.

It is found in the cytoplasm. It functions in the pathway lipid metabolism; fatty acid biosynthesis. In terms of biological role, carrier of the growing fatty acid chain in fatty acid biosynthesis. The protein is Acyl carrier protein of Nostoc sp. (strain PCC 7120 / SAG 25.82 / UTEX 2576).